The chain runs to 424 residues: MLEVVISDIQAREILDSRGYPTLYVKVITNTGTFGEACVPSGASTGIKEALELRDQDTSRYQGKGVLQALKNVKEVLLPVLQGVSIFDQILIDSIMVEADGTPNKEKLGANAILGVSLAAAKAAAATLGRSFYRYVGGCFAHILPCPMMNLINGGMHANNGLQFQEFMIRPIGAHSLQEAVRMGADVFHTLKNLLNDKHLATGVGDEGGFAPQLKSNSEALDLLVLAIEKAGFQPGEEISLALDCAASSFYDTKTETYAGKNSQEQVGILADLCDRYPIDSIEDGLAEEDFDGWELLTAELGENIQIVGDDLFVTNPELIAEGISKGLANAVLIKPNQIGTLTETSEAIQLAHSQGYTTILSHRSGETEDTTIADLAVAFNTGQIKTGSLSRSERIAKYNRLMAIEEELGSEGLFKDSNPFSGE.

A (2R)-2-phosphoglycerate-binding site is contributed by Gln-165. The active-site Proton donor is Glu-207. Mg(2+)-binding residues include Asp-244, Glu-283, and Asp-310. Lys-335, Arg-364, Ser-365, and Lys-386 together coordinate (2R)-2-phosphoglycerate. The active-site Proton acceptor is the Lys-335.

The protein belongs to the enolase family. Requires Mg(2+) as cofactor.

Its subcellular location is the cytoplasm. It localises to the secreted. It is found in the cell surface. The enzyme catalyses (2R)-2-phosphoglycerate = phosphoenolpyruvate + H2O. The protein operates within carbohydrate degradation; glycolysis; pyruvate from D-glyceraldehyde 3-phosphate: step 4/5. Catalyzes the reversible conversion of 2-phosphoglycerate (2-PG) into phosphoenolpyruvate (PEP). It is essential for the degradation of carbohydrates via glycolysis. This Chlamydia abortus (strain DSM 27085 / S26/3) (Chlamydophila abortus) protein is Enolase.